The chain runs to 599 residues: Sulfite reductase [NADPH] flavoprotein alpha-component (599 aa).

Positions 64–202 (VTLISASQTG…AASEWRARVV (139 aa)) constitute a Flavodoxin-like domain. Residues 70–75 (SQTGNA), 117–120 (STQG), and 153–162 (LGDTSYEFFC) each bind FMN. An FAD-binding FR-type domain is found at 234–448 (DAPLTATLSV…IEHNDNFRLP (215 aa)). FAD is bound by residues T322, A356, 386–389 (RLYS), 404–406 (TVG), Y410, and 419–422 (GGAS). NADP(+) contacts are provided by residues 519–520 (SR), 525–529 (KIYVQ), and D561. Residue Y599 participates in FAD binding.

The protein belongs to the NADPH-dependent sulphite reductase flavoprotein subunit CysJ family. In the N-terminal section; belongs to the flavodoxin family. This sequence in the C-terminal section; belongs to the flavoprotein pyridine nucleotide cytochrome reductase family. In terms of assembly, alpha(8)-beta(8). The alpha component is a flavoprotein, the beta component is a hemoprotein. FAD is required as a cofactor. It depends on FMN as a cofactor.

It catalyses the reaction hydrogen sulfide + 3 NADP(+) + 3 H2O = sulfite + 3 NADPH + 4 H(+). It participates in sulfur metabolism; hydrogen sulfide biosynthesis; hydrogen sulfide from sulfite (NADPH route): step 1/1. Functionally, component of the sulfite reductase complex that catalyzes the 6-electron reduction of sulfite to sulfide. This is one of several activities required for the biosynthesis of L-cysteine from sulfate. The flavoprotein component catalyzes the electron flow from NADPH -&gt; FAD -&gt; FMN to the hemoprotein component. In Salmonella paratyphi A (strain ATCC 9150 / SARB42), this protein is Sulfite reductase [NADPH] flavoprotein alpha-component.